The following is a 203-amino-acid chain: Ribosomal RNA large subunit methyltransferase E (203 aa).

S-adenosyl-L-methionine is bound by residues Gly51, Trp53, Asp69, Asp85, and Asp108. The active-site Proton acceptor is Lys148.

This sequence belongs to the class I-like SAM-binding methyltransferase superfamily. RNA methyltransferase RlmE family.

It is found in the cytoplasm. It carries out the reaction uridine(2552) in 23S rRNA + S-adenosyl-L-methionine = 2'-O-methyluridine(2552) in 23S rRNA + S-adenosyl-L-homocysteine + H(+). Its function is as follows. Specifically methylates the uridine in position 2552 of 23S rRNA at the 2'-O position of the ribose in the fully assembled 50S ribosomal subunit. This chain is Ribosomal RNA large subunit methyltransferase E, found in Methanosphaerula palustris (strain ATCC BAA-1556 / DSM 19958 / E1-9c).